The sequence spans 162 residues: MDEQEPAPKRGRRFKEQTPVQRALGLLVRREHSRKELNRKLLARGIEPDAAQAAVDRLTDEGWQDDTRFAAAVVRNRAGSGYGPLHIRAELGTHGLDSEAISAALAAFEGDWTENARDLIRRRFGEQGPTDLPQRRKAADLLARRGFEGNSIRAATRFDLED.

Belongs to the RecX family.

It is found in the cytoplasm. Modulates RecA activity. The chain is Regulatory protein RecX from Xanthomonas axonopodis pv. citri (strain 306).